The primary structure comprises 406 residues: Succinylornithine transaminase (406 aa).

N6-(pyridoxal phosphate)lysine is present on Lys252.

The protein belongs to the class-III pyridoxal-phosphate-dependent aminotransferase family. AstC subfamily. Pyridoxal 5'-phosphate serves as cofactor.

The catalysed reaction is N(2)-succinyl-L-ornithine + 2-oxoglutarate = N-succinyl-L-glutamate 5-semialdehyde + L-glutamate. It participates in amino-acid degradation; L-arginine degradation via AST pathway; L-glutamate and succinate from L-arginine: step 3/5. In terms of biological role, catalyzes the transamination of N(2)-succinylornithine and alpha-ketoglutarate into N(2)-succinylglutamate semialdehyde and glutamate. Can also act as an acetylornithine aminotransferase. This chain is Succinylornithine transaminase, found in Escherichia coli O17:K52:H18 (strain UMN026 / ExPEC).